The sequence spans 146 residues: Large ribosomal subunit protein uL15 (146 aa).

A compositionally biased stretch (basic and acidic residues) spans M1–R13. Residues M1 to E51 are disordered. Gly residues-rich tracts occupy residues R21–A31 and S42–E51.

This sequence belongs to the universal ribosomal protein uL15 family. As to quaternary structure, part of the 50S ribosomal subunit.

In terms of biological role, binds to the 23S rRNA. This is Large ribosomal subunit protein uL15 from Bacillus cereus (strain G9842).